Consider the following 234-residue polypeptide: uncharacterized protein (234 aa).

Residues 199 to 234 are disordered; it reads DNQNEPLENYSDDNNFSNFDETEHVDDSEMNDDNFI.

This is an uncharacterized protein from Buchnera aphidicola subsp. Schizaphis graminum (strain Sg).